The primary structure comprises 411 residues: Glucose-1-phosphate adenylyltransferase (411 aa).

Alpha-D-glucose 1-phosphate contacts are provided by residues glycine 162, 177-178 (EK), and serine 195.

Belongs to the bacterial/plant glucose-1-phosphate adenylyltransferase family. As to quaternary structure, homotetramer.

It carries out the reaction alpha-D-glucose 1-phosphate + ATP + H(+) = ADP-alpha-D-glucose + diphosphate. Its pathway is glycan biosynthesis; glycogen biosynthesis. In terms of biological role, involved in the biosynthesis of ADP-glucose, a building block required for the elongation reactions to produce glycogen. Catalyzes the reaction between ATP and alpha-D-glucose 1-phosphate (G1P) to produce pyrophosphate and ADP-Glc. The polypeptide is Glucose-1-phosphate adenylyltransferase (Thermodesulfovibrio yellowstonii (strain ATCC 51303 / DSM 11347 / YP87)).